The following is a 617-amino-acid chain: Threonine--tRNA ligase (617 aa).

Residues 209-502 form a catalytic region; it reads DHRRLGKDLD…MTENYAGDFP (294 aa). Zn(2+) contacts are provided by Cys-302, His-353, and His-479.

This sequence belongs to the class-II aminoacyl-tRNA synthetase family. As to quaternary structure, homodimer. It depends on Zn(2+) as a cofactor.

It is found in the cytoplasm. It catalyses the reaction tRNA(Thr) + L-threonine + ATP = L-threonyl-tRNA(Thr) + AMP + diphosphate + H(+). Functionally, catalyzes the attachment of threonine to tRNA(Thr) in a two-step reaction: L-threonine is first activated by ATP to form Thr-AMP and then transferred to the acceptor end of tRNA(Thr). Also edits incorrectly charged L-seryl-tRNA(Thr). In Synechococcus sp. (strain CC9311), this protein is Threonine--tRNA ligase.